Consider the following 173-residue polypeptide: NADH-ubiquinone oxidoreductase chain 6 (173 aa).

Helical transmembrane passes span Met1–Ser21, Ala24–Val44, Leu53–Leu73, Val87–Gly107, and Gly141–Leu161.

Belongs to the complex I subunit 6 family.

It is found in the mitochondrion membrane. It carries out the reaction a ubiquinone + NADH + 5 H(+)(in) = a ubiquinol + NAD(+) + 4 H(+)(out). In terms of biological role, core subunit of the mitochondrial membrane respiratory chain NADH dehydrogenase (Complex I) that is believed to belong to the minimal assembly required for catalysis. Complex I functions in the transfer of electrons from NADH to the respiratory chain. The immediate electron acceptor for the enzyme is believed to be ubiquinone. The polypeptide is NADH-ubiquinone oxidoreductase chain 6 (MT-ND6) (Oncorhynchus mykiss (Rainbow trout)).